The sequence spans 410 residues: Gamma-glutamyl phosphate reductase (410 aa).

It belongs to the gamma-glutamyl phosphate reductase family.

It is found in the cytoplasm. The enzyme catalyses L-glutamate 5-semialdehyde + phosphate + NADP(+) = L-glutamyl 5-phosphate + NADPH + H(+). The protein operates within amino-acid biosynthesis; L-proline biosynthesis; L-glutamate 5-semialdehyde from L-glutamate: step 2/2. In terms of biological role, catalyzes the NADPH-dependent reduction of L-glutamate 5-phosphate into L-glutamate 5-semialdehyde and phosphate. The product spontaneously undergoes cyclization to form 1-pyrroline-5-carboxylate. This chain is Gamma-glutamyl phosphate reductase, found in Campylobacter jejuni subsp. jejuni serotype O:23/36 (strain 81-176).